The primary structure comprises 290 residues: Undecaprenyl-diphosphatase 2 (290 aa).

The next 6 helical transmembrane spans lie at Trp104–Ile124, Leu128–Ala148, Cys174–Leu194, Ser205–Phe225, Gln237–Leu257, and Phe268–Leu288.

It belongs to the UppP family.

It localises to the cell membrane. The catalysed reaction is di-trans,octa-cis-undecaprenyl diphosphate + H2O = di-trans,octa-cis-undecaprenyl phosphate + phosphate + H(+). Catalyzes the dephosphorylation of undecaprenyl diphosphate (UPP). Confers resistance to bacitracin. The polypeptide is Undecaprenyl-diphosphatase 2 (Corynebacterium jeikeium (strain K411)).